We begin with the raw amino-acid sequence, 457 residues long: Tryptophan aminotransferase-related protein 3 (457 aa).

The chain crosses the membrane as a helical span at residues 6–26 (LLIAGSIILNLVFTIHILYNN). Pyridoxal 5'-phosphate-binding positions include tyrosine 123, 163 to 164 (AT), asparagine 237, 257 to 260 (DYAY), 280 to 283 (SLSK), and arginine 291. Residue lysine 283 is modified to N6-(pyridoxal phosphate)lysine.

It belongs to the alliinase family. Requires pyridoxal 5'-phosphate as cofactor.

Its subcellular location is the membrane. In terms of biological role, probable aminotransferase. In Arabidopsis thaliana (Mouse-ear cress), this protein is Tryptophan aminotransferase-related protein 3 (TAR3).